The following is an 840-amino-acid chain: DNA mismatch repair protein MutS (840 aa).

Residue 601–608 coordinates ATP; the sequence is GPNMSGKS.

This sequence belongs to the DNA mismatch repair MutS family.

Functionally, this protein is involved in the repair of mismatches in DNA. It is possible that it carries out the mismatch recognition step. This protein has a weak ATPase activity. The chain is DNA mismatch repair protein MutS from Lactococcus lactis subsp. cremoris (strain SK11).